We begin with the raw amino-acid sequence, 589 residues long: Enhancer of polycomb-like protein 1 (589 aa).

Disordered regions lie at residues Gly298–Glu339, Met403–Pro430, Leu468–Val497, and Leu516–Ser589. Positions Asp474 to Gln487 are enriched in basic and acidic residues. Residues Pro557–Pro566 are compositionally biased toward low complexity. Positions Leu567–Ser589 are enriched in pro residues.

The protein belongs to the enhancer of polycomb family. In terms of assembly, component of the NuA4 histone acetyltransferase complex.

It is found in the nucleus. Functionally, component of the NuA4 histone acetyltransferase complex which is involved in transcriptional activation of selected genes principally by acetylation of nucleosomal histone H4 and H2A. The NuA4 complex is also involved in DNA repair. Involved in gene silencing by neighboring heterochromatin, blockage of the silencing spreading along the chromosome, and required for cell cycle progression through G2/M. The polypeptide is Enhancer of polycomb-like protein 1 (epl-1) (Neurospora crassa (strain ATCC 24698 / 74-OR23-1A / CBS 708.71 / DSM 1257 / FGSC 987)).